Consider the following 159-residue polypeptide: Phosphopantetheine adenylyltransferase (159 aa).

Thr10 is a binding site for substrate. ATP is bound by residues 10–11 (TF) and His18. Residues Lys42, Met74, and Arg88 each coordinate substrate. Residues 89–91 (GLR), Glu99, and 124–130 (WSFISSS) each bind ATP.

The protein belongs to the bacterial CoaD family. As to quaternary structure, homohexamer. It depends on Mg(2+) as a cofactor.

The protein resides in the cytoplasm. The enzyme catalyses (R)-4'-phosphopantetheine + ATP + H(+) = 3'-dephospho-CoA + diphosphate. It participates in cofactor biosynthesis; coenzyme A biosynthesis; CoA from (R)-pantothenate: step 4/5. Its function is as follows. Reversibly transfers an adenylyl group from ATP to 4'-phosphopantetheine, yielding dephospho-CoA (dPCoA) and pyrophosphate. The protein is Phosphopantetheine adenylyltransferase of Salmonella agona (strain SL483).